The sequence spans 211 residues: Thiamine-phosphate synthase (211 aa).

4-amino-2-methyl-5-(diphosphooxymethyl)pyrimidine contacts are provided by residues 37 to 41 (QLRIK) and Asn-69. 2 residues coordinate Mg(2+): Asp-70 and Asp-89. Ser-108 provides a ligand contact to 4-amino-2-methyl-5-(diphosphooxymethyl)pyrimidine. 134 to 136 (TQT) provides a ligand contact to 2-[(2R,5Z)-2-carboxy-4-methylthiazol-5(2H)-ylidene]ethyl phosphate. Lys-137 provides a ligand contact to 4-amino-2-methyl-5-(diphosphooxymethyl)pyrimidine. Residues Gly-166 and 186-187 (VS) contribute to the 2-[(2R,5Z)-2-carboxy-4-methylthiazol-5(2H)-ylidene]ethyl phosphate site.

Belongs to the thiamine-phosphate synthase family. Requires Mg(2+) as cofactor.

The enzyme catalyses 2-[(2R,5Z)-2-carboxy-4-methylthiazol-5(2H)-ylidene]ethyl phosphate + 4-amino-2-methyl-5-(diphosphooxymethyl)pyrimidine + 2 H(+) = thiamine phosphate + CO2 + diphosphate. It carries out the reaction 2-(2-carboxy-4-methylthiazol-5-yl)ethyl phosphate + 4-amino-2-methyl-5-(diphosphooxymethyl)pyrimidine + 2 H(+) = thiamine phosphate + CO2 + diphosphate. The catalysed reaction is 4-methyl-5-(2-phosphooxyethyl)-thiazole + 4-amino-2-methyl-5-(diphosphooxymethyl)pyrimidine + H(+) = thiamine phosphate + diphosphate. The protein operates within cofactor biosynthesis; thiamine diphosphate biosynthesis; thiamine phosphate from 4-amino-2-methyl-5-diphosphomethylpyrimidine and 4-methyl-5-(2-phosphoethyl)-thiazole: step 1/1. Functionally, condenses 4-methyl-5-(beta-hydroxyethyl)thiazole monophosphate (THZ-P) and 2-methyl-4-amino-5-hydroxymethyl pyrimidine pyrophosphate (HMP-PP) to form thiamine monophosphate (TMP). The chain is Thiamine-phosphate synthase from Escherichia coli (strain SE11).